The sequence spans 562 residues: uncharacterized protein (562 aa).

A run of 5 helical transmembrane segments spans residues 15–34, 41–63, 78–97, 104–126, and 165–187; these read WGGGVAHSVLILSLVIAFGI, VAGISLGVTWILFVGIVFGHFNL, LILFVYSIGLQVGPGFFSAF, LNMLAMIVVFAGVIITLALHFIT, and IALGYAVAYPLGVVGCIMSLLGL. RCK C-terminal domains lie at 204-286 and 289-374; these read QGLG…ITAF and KPIE…VLGN. Transmembrane regions (helical) follow at residues 384 to 403, 413 to 430, 450 to 472, 476 to 498, 505 to 524, and 539 to 561; these read LIPIFLGIALGCILGSIPFM, LGLAGGPLIVSILISRFG, IGISLFLACVGLGAGDGFVETII, GYVWIAYGMIITIVPLLLAGFIG, NYYTLIGVLAGSTTNPPALA, and YATVYPLTMFLRVLTAQLLILSL.

Belongs to the AAE transporter (TC 2.A.81) family.

Its subcellular location is the cell membrane. This is an uncharacterized protein from Bacteroides fragilis (strain YCH46).